Reading from the N-terminus, the 377-residue chain is Serine/threonine-protein phosphatase PP2A-2 catalytic subunit (377 aa).

The tract at residues 1–66 (MDMEIDDPMH…SGIADHKSSK (66 aa)) is disordered. Over residues 28–40 (DDGKNNTKARSND) the composition is skewed to basic and acidic residues. At Ser38 the chain carries Phosphoserine. Position 43 is a phosphothreonine (Thr43). Residues Asp125, His127, Asp153, and Asn185 each coordinate Mn(2+). His186 acts as the Proton donor in catalysis. Mn(2+)-binding residues include His235 and His309. The residue at position 377 (Leu377) is a Leucine methyl ester.

It belongs to the PPP phosphatase family. PP-2A subfamily. Inactivated in a complex with phosphatase methylesterase PPE1 (PP2Ai). Interacts with phosphatase 2A activator RRD2, which can reactivate PP2Ai by dissociating the catalytic subunit from the complex. Interacts with TAP42. Mn(2+) is required as a cofactor. Post-translationally, reversibly methyl esterified on Leu-377 by leucine carboxyl methyltransferase 1 (PPM1) and protein phosphatase methylesterase 1 (PPE1). Carboxyl methylation influences the affinity of the catalytic subunit for the different regulatory subunits, thereby modulating the PP2A holoenzyme's substrate specificity, enzyme activity and cellular localization.

The catalysed reaction is O-phospho-L-seryl-[protein] + H2O = L-seryl-[protein] + phosphate. It catalyses the reaction O-phospho-L-threonyl-[protein] + H2O = L-threonyl-[protein] + phosphate. Exact function not known, phosphatase 2A performs an essential cellular function. This Saccharomyces cerevisiae (strain ATCC 204508 / S288c) (Baker's yeast) protein is Serine/threonine-protein phosphatase PP2A-2 catalytic subunit (PPH22).